We begin with the raw amino-acid sequence, 821 residues long: Protein SCAR1 (821 aa).

Disordered regions lie at residues Lys-168 to Arg-189, Thr-205 to Ser-289, and Thr-577 to Lys-625. Residues Cys-206–Glu-225 are compositionally biased toward polar residues. Residues Ile-226–Lys-250 are compositionally biased toward basic and acidic residues. Residues Val-252 to Ile-265 are compositionally biased toward polar residues. Over residues Ser-592 to Gln-612 the composition is skewed to low complexity. The region spanning Glu-756–Val-774 is the WH2 domain. A disordered region spans residues Gln-802–Thr-821. Positions Asp-807–Thr-821 are enriched in acidic residues.

This sequence belongs to the SCAR/WAVE family. As to quaternary structure, binds BRK1 and actin. Interacts with SPK1, ABI1 and ABI2. In terms of tissue distribution, expressed in expanding cotyledons, expanding leaves and expanding siliques containing developing embryos. Detected in unopened flower buds and in the expanding tip region of roots. Reduced expression in mature leaves and mature cotyledons.

The protein resides in the cytoplasm. It localises to the cytoskeleton. Functionally, involved in regulation of actin and microtubule organization. Part of a WAVE complex that activates the Arp2/3 complex. Regulates trichome branch positioning and expansion. In Arabidopsis thaliana (Mouse-ear cress), this protein is Protein SCAR1 (SCAR1).